The following is a 94-amino-acid chain: Co-chaperonin GroES (94 aa).

Belongs to the GroES chaperonin family. In terms of assembly, heptamer of 7 subunits arranged in a ring. Interacts with the chaperonin GroEL.

It is found in the cytoplasm. Its function is as follows. Together with the chaperonin GroEL, plays an essential role in assisting protein folding. The GroEL-GroES system forms a nano-cage that allows encapsulation of the non-native substrate proteins and provides a physical environment optimized to promote and accelerate protein folding. GroES binds to the apical surface of the GroEL ring, thereby capping the opening of the GroEL channel. This chain is Co-chaperonin GroES, found in Lactobacillus gasseri (strain ATCC 33323 / DSM 20243 / BCRC 14619 / CIP 102991 / JCM 1131 / KCTC 3163 / NCIMB 11718 / NCTC 13722 / AM63).